The chain runs to 481 residues: MTVSYQLDVSSGNPLLFLRLLGRWRGSIWKSVVGDLFVWLLFYYAIYFAYRYAFSKQLQTVFEEISIHTDDRMKYLPLTFMLGFFVTTVFERWRSALNVMPFIESVALSVAVLLPGKGREDRLTRRAIIRYVVLHQILVFRDISMRVRRRFPTLKYVVDAGFMRQEELDVLESVNQESSQTYWVPINWANSLALVAHQQKLIDQPTAFNNVIFAIKEFRVAMETLIKFDAIPIPIAYPQVVFLAVRVYFAICLVSRQFLISDMKSKTQMDWPVPIMTVLEFIFVIGWMKVAEVLLNPLGEDDDDFEVNSIIDNNISRGMAIVDTTHGYHPDLVDDVFSDPNYLPAYSENSQIPRNLTGSAAKVELAAPTDEVKIVRVNPEDAPPTSERGSMFTRRNAYSLRNRKISIASNNLESPSQERKFNLSMPAGMLNKSTQPDRPTMETVSEEHEPSHFYRGDRVHSSDSGLSKTQQSSEESVDKKG.

Residues 1–27 (MTVSYQLDVSSGNPLLFLRLLGRWRGS) are Cytoplasmic-facing. Residues 28-48 (IWKSVVGDLFVWLLFYYAIYF) form a helical membrane-spanning segment. At 49 to 95 (AYRYAFSKQLQTVFEEISIHTDDRMKYLPLTFMLGFFVTTVFERWRS) the chain is on the extracellular side. A helical membrane pass occupies residues 96-116 (ALNVMPFIESVALSVAVLLPG). Residues 117–230 (KGREDRLTRR…AMETLIKFDA (114 aa)) are Cytoplasmic-facing. Residues 231–251 (IPIPIAYPQVVFLAVRVYFAI) traverse the membrane as a helical segment. Over 252-274 (CLVSRQFLISDMKSKTQMDWPVP) the chain is Extracellular. A helical membrane pass occupies residues 275–295 (IMTVLEFIFVIGWMKVAEVLL). The Cytoplasmic portion of the chain corresponds to 296-481 (NPLGEDDDDF…SSEESVDKKG (186 aa)). Residues 427–481 (AGMLNKSTQPDRPTMETVSEEHEPSHFYRGDRVHSSDSGLSKTQQSSEESVDKKG) form a disordered region. Residues 445–461 (SEEHEPSHFYRGDRVHS) are compositionally biased toward basic and acidic residues. The segment covering 462–474 (SDSGLSKTQQSSE) has biased composition (polar residues).

It belongs to the anion channel-forming bestrophin (TC 1.A.46) family. Calcium-sensitive chloride channel subfamily. As to quaternary structure, forms oligomers.

It localises to the cell membrane. Functionally, forms chloride channels. In Caenorhabditis elegans, this protein is Bestrophin homolog 17.